We begin with the raw amino-acid sequence, 184 residues long: Ribosome-recycling factor (184 aa).

Belongs to the RRF family.

Its subcellular location is the cytoplasm. In terms of biological role, responsible for the release of ribosomes from messenger RNA at the termination of protein biosynthesis. May increase the efficiency of translation by recycling ribosomes from one round of translation to another. The chain is Ribosome-recycling factor from Stenotrophomonas maltophilia (strain R551-3).